Reading from the N-terminus, the 362-residue chain is Ferrochelatase (362 aa).

Residues histidine 228 and glutamate 309 each coordinate Fe cation.

This sequence belongs to the ferrochelatase family.

It is found in the cytoplasm. The enzyme catalyses heme b + 2 H(+) = protoporphyrin IX + Fe(2+). It functions in the pathway porphyrin-containing compound metabolism; protoheme biosynthesis; protoheme from protoporphyrin-IX: step 1/1. In terms of biological role, catalyzes the ferrous insertion into protoporphyrin IX. This chain is Ferrochelatase, found in Bordetella bronchiseptica (strain ATCC BAA-588 / NCTC 13252 / RB50) (Alcaligenes bronchisepticus).